Reading from the N-terminus, the 360-residue chain is Type 2 DNA topoisomerase 6 subunit A (360 aa).

The 138-residue stretch at 3-140 (EIERRCLRAL…FHIRPEEDGA (138 aa)) folds into the Topo IIA-type catalytic domain. Tyr-97 acts as the O-(5'-phospho-DNA)-tyrosine intermediate in catalysis. The Mg(2+) site is built by Glu-193 and Asp-245.

The protein belongs to the TOP6A family. Homodimer. Heterotetramer of two Top6A and two Top6B chains. Requires Mg(2+) as cofactor.

The enzyme catalyses ATP-dependent breakage, passage and rejoining of double-stranded DNA.. Its function is as follows. Relaxes both positive and negative superturns and exhibits a strong decatenase activity. This Archaeoglobus fulgidus (strain ATCC 49558 / DSM 4304 / JCM 9628 / NBRC 100126 / VC-16) protein is Type 2 DNA topoisomerase 6 subunit A.